A 269-amino-acid polypeptide reads, in one-letter code: Aquaporin-1 (269 aa).

At methionine 1 to tryptophan 11 the chain is on the cytoplasmic side. Residues arginine 12 to isoleucine 29 form a helical membrane-spanning segment. The Extracellular segment spans residues glycine 30–valine 46. Asparagine 42 carries N-linked (GlcNAc...) asparagine glycosylation. The helical transmembrane segment at glutamine 47–glutamine 65 threads the bilayer. Residues serine 66–glycine 68 are Cytoplasmic-facing. An intramembrane segment occupies histidine 69 to glycine 82. The short motif at asparagine 76–alanine 78 is the NPA 1 element. Topologically, residues leucine 83–serine 90 are cytoplasmic. Residues isoleucine 91–serine 109 traverse the membrane as a helical segment. Over alanine 110–valine 133 the chain is Extracellular. A helical membrane pass occupies residues asparagine 134–valine 153. The Cytoplasmic segment spans residues leucine 154 to aspartate 163. The chain crosses the membrane as a helical span at residues leucine 164–leucine 181. The Extracellular portion of the chain corresponds to leucine 182–tyrosine 186. Residues threonine 187–serine 199 lie within the membrane without spanning it. The short motif at asparagine 192–alanine 194 is the NPA 2 element. Topologically, residues alanine 200 to phenylalanine 206 are extracellular. N-linked (GlcNAc...) asparagine glycosylation is present at asparagine 205. A helical transmembrane segment spans residues serine 207–valine 224. The Cytoplasmic segment spans residues leucine 225–lysine 269. Serine 247 is modified (phosphoserine). Tyrosine 253 carries the post-translational modification Phosphotyrosine. Serine 262 bears the Phosphoserine mark.

Belongs to the MIP/aquaporin (TC 1.A.8) family. As to quaternary structure, homotetramer; each monomer provides an independent water pore. Component of the ankyrin-1 complex in the erythrocyte, composed of ANK1, RHCE, RHAG, SLC4A1, EPB42, GYPA, GYPB and AQP1. Interacts with EPHB2; involved in endolymph production in the inner ear. Identified in a complex with STOM. Interacts (via the N-terminal) with ANK1 (via ANK 1-5 repeats). Interacts (via the C-terminal) with EPB42. In terms of tissue distribution, erythrocytes and renal tubules.

The protein localises to the cell membrane. It carries out the reaction H2O(in) = H2O(out). The catalysed reaction is nitric oxide(out) = nitric oxide(in). The enzyme catalyses CO2(out) = CO2(in). It catalyses the reaction glycerol(in) = glycerol(out). It carries out the reaction H2O2(out) = H2O2(in). The catalysed reaction is K(+)(in) = K(+)(out). The enzyme catalyses Na(+)(in) = Na(+)(out). Functionally, forms a water channel that facilitates the transport of water across cell membranes, playing a crucial role in water homeostasis in various tissues. Could also be permeable to small solutes including hydrogen peroxide, glycerol and gases such as amonnia (NH3), nitric oxide (NO) and carbon dioxide (CO2). Recruited to the ankyrin-1 complex, a multiprotein complex of the erythrocyte membrane, it could be part of a CO2 metabolon, linking facilitated diffusion of CO2 across the membrane, anion exchange of Cl(-)/HCO3(-) and interconversion of dissolved CO2 and carbonic acid in the cytosol. In vitro, it shows non-selective gated cation channel activity and may be permeable to cations like K(+) and Na(+) in vivo. The polypeptide is Aquaporin-1 (Rattus norvegicus (Rat)).